Consider the following 24-residue polypeptide: General odorant-binding protein (24 aa).

It belongs to the PBP/GOBP family. Homodimer. As to expression, antenna.

Functionally, present in the aqueous fluid surrounding olfactory sensory dendrites and are thought to aid in the capture and transport of hydrophobic odorants into and through this fluid. The polypeptide is General odorant-binding protein (Antheraea polyphemus (Polyphemus moth)).